The following is a 163-amino-acid chain: MSEAHNELTHLDAAGHARMVDVGDKAVTAREAVARGRVVMQPETLALIMDGKLPKGDVLAVARVAGIMAAKRTAELIPLCHLLNLSHASVQFTPDPASNALEIEATVRCQGQTGVEMEALTAVSIAALTIYDMCKAVDKTMQIDQIRLIAKRGGRSGDWQRPR.

Substrate contacts are provided by residues 79 to 81 and 117 to 118; these read LCH and ME. Asp-132 is an active-site residue.

It belongs to the MoaC family. As to quaternary structure, homohexamer; trimer of dimers.

It catalyses the reaction (8S)-3',8-cyclo-7,8-dihydroguanosine 5'-triphosphate = cyclic pyranopterin phosphate + diphosphate. The protein operates within cofactor biosynthesis; molybdopterin biosynthesis. Its function is as follows. Catalyzes the conversion of (8S)-3',8-cyclo-7,8-dihydroguanosine 5'-triphosphate to cyclic pyranopterin monophosphate (cPMP). The polypeptide is Cyclic pyranopterin monophosphate synthase (Chloroflexus aurantiacus (strain ATCC 29366 / DSM 635 / J-10-fl)).